Reading from the N-terminus, the 354-residue chain is Homer protein homolog 1 (354 aa).

The region spanning Met-1–Ala-110 is the WH1 domain. Gly-2 carries the post-translational modification N-acetylglycine. The disordered stretch occupies residues Lys-114–Phe-173. Polar residues-rich tracts occupy residues Ser-138–Gly-147 and Asp-155–Phe-173. The stretch at Lys-181–Glu-352 forms a coiled coil. Residues Lys-290–Ser-354 form a required for tetramerization region. Position 306 is a phosphoserine (Ser-306).

It belongs to the Homer family. In terms of assembly, tetramer; this tetrameric structure is critical for forming the high-order complex with SHANK1, which in turn is necessary for the structural and functional integrity of dendritic spines. Interacts with GRM1, GRM5, ITPR1, DNM3, RYR1, RYR2 and SHANK3. Interacts with IFT57 and OPHN1. Isoform 1 encodes a coiled-coil structure that mediates homo- and heteromultimerization. Interacts with SHANK1; forms high-order polymerized complex with a mesh-like network structure, at least composed of SHANK1, HOMER1 and DLGAP1; the complex formation is SHANK1 multimerization dependent. Interacts with NFATC4. Interacts with DAGLA (via PPXXF motif); this interaction is required for the cell membrane localization of DAGLA. Interacts with SRGAP2.

It localises to the cytoplasm. The protein resides in the postsynaptic density. The protein localises to the synapse. It is found in the cell projection. Its subcellular location is the dendritic spine. Postsynaptic density scaffolding protein. Binds and cross-links cytoplasmic regions of GRM1, GRM5, ITPR1, DNM3, RYR1, RYR2, SHANK1 and SHANK3. By physically linking GRM1 and GRM5 with ER-associated ITPR1 receptors, it aids the coupling of surface receptors to intracellular calcium release. May also couple GRM1 to PI3 kinase through its interaction with AGAP2. Isoform 1 regulates the trafficking and surface expression of GRM5. Isoform 3 acts as a natural dominant negative, in dynamic competition with constitutively expressed isoform 1 to regulate synaptic metabotropic glutamate function. Isoform 3, may be involved in the structural changes that occur at synapses during long-lasting neuronal plasticity and development. Forms a high-order complex with SHANK1, which in turn is necessary for the structural and functional integrity of dendritic spines. Negatively regulates T cell activation by inhibiting the calcineurin-NFAT pathway. Acts by competing with calcineurin/PPP3CA for NFAT protein binding, hence preventing NFAT activation by PPP3CA. In Homo sapiens (Human), this protein is Homer protein homolog 1.